The following is a 339-amino-acid chain: tRNA-splicing endonuclease (339 aa).

Residues Tyr274, His285, and Lys316 contribute to the active site.

Belongs to the tRNA-intron endonuclease family. Archaeal long subfamily. As to quaternary structure, homodimer. Ca(2+) is required as a cofactor. The cofactor is Mg(2+). Post-translationally, the N-terminus is blocked.

The enzyme catalyses pretRNA = a 3'-half-tRNA molecule with a 5'-OH end + a 5'-half-tRNA molecule with a 2',3'-cyclic phosphate end + an intron with a 2',3'-cyclic phosphate and a 5'-hydroxyl terminus.. Functionally, endonuclease that removes tRNA introns. Cleaves pre-tRNA at the 5'- and 3'-splice sites to release the intron. The products are an intron and two tRNA half-molecules bearing 2',3' cyclic phosphate and 5'-OH termini. Recognizes a pseudosymmetric substrate in which 2 bulged loops of 3 bases are separated by a stem of 4 bp. This chain is tRNA-splicing endonuclease, found in Haloferax volcanii (strain ATCC 29605 / DSM 3757 / JCM 8879 / NBRC 14742 / NCIMB 2012 / VKM B-1768 / DS2) (Halobacterium volcanii).